Reading from the N-terminus, the 869-residue chain is Leucine--tRNA ligase (869 aa).

A 'HIGH' region motif is present at residues 42 to 52; the sequence is PYPSGKLHMGH. The 'KMSKS' region signature appears at 624–628; that stretch reads TMSKS. Lysine 627 is a binding site for ATP.

The protein belongs to the class-I aminoacyl-tRNA synthetase family.

It localises to the cytoplasm. The enzyme catalyses tRNA(Leu) + L-leucine + ATP = L-leucyl-tRNA(Leu) + AMP + diphosphate. The sequence is that of Leucine--tRNA ligase from Nitrosomonas europaea (strain ATCC 19718 / CIP 103999 / KCTC 2705 / NBRC 14298).